Here is a 91-residue protein sequence, read N- to C-terminus: Sec-independent protein translocase protein TatA (91 aa).

Residues 1 to 21 (MGAMSPWHWAIVALVVIILFG) traverse the membrane as a helical segment. A disordered region spans residues 44 to 91 (KEMQNDNSTPAPTAQQSAPAELPVADTTTAPVTPPAPVQPQHTEPKSA). The span at 51-74 (STPAPTAQQSAPAELPVADTTTAP) shows a compositional bias: low complexity.

This sequence belongs to the TatA/E family. In terms of assembly, the Tat system comprises two distinct complexes: a TatABC complex, containing multiple copies of TatA, TatB and TatC subunits, and a separate TatA complex, containing only TatA subunits. Substrates initially bind to the TatABC complex, which probably triggers association of the separate TatA complex to form the active translocon.

It is found in the cell membrane. Functionally, part of the twin-arginine translocation (Tat) system that transports large folded proteins containing a characteristic twin-arginine motif in their signal peptide across membranes. TatA could form the protein-conducting channel of the Tat system. This Rhodococcus jostii (strain RHA1) protein is Sec-independent protein translocase protein TatA.